We begin with the raw amino-acid sequence, 59 residues long: Large ribosomal subunit protein uL30 (59 aa).

It belongs to the universal ribosomal protein uL30 family. As to quaternary structure, part of the 50S ribosomal subunit.

This Persephonella marina (strain DSM 14350 / EX-H1) protein is Large ribosomal subunit protein uL30.